Reading from the N-terminus, the 522-residue chain is MLLIRRTINAFLGCIHCNLTATCILIAFVITMYVVLVSEPASVDGTMGNFLPFSKMDLATKRDRPFYSNCVNTQDYLLNPSYIKQNASFVMLTRNGELEDVIKTINSIEEHFNQWFHYPYVFLNDQPFEEDFKAKVRDVTVGALVEFGTIDEISWNFPSDVKDTFEFYNAIEDQGDRSILYGNLESYHKMCRFYSGLFYKHPLVQKYEWYWRLEPDVEFFCDITYDPFLEMLRTNKKYGFTIIIPELYWTVPNLFRHTKSFISQKGVTLGSLWKLFTKDYDIFESDDPELRDWINYDFQAKAKISEKIAIEQLLKKGDDFQQINDDKEGIMNLIHKARSRKHIVEDKFFNEEYNLCHFWSNFEIARLSVFDNDIYNSFFQYLEKSGGFWKERWGDAPVHSIGLSLTLDLDDVHYFRDIGYRHSTIQHCPHNAMGNEEFSYLASDSKFKRKNAAYDEGREFGCGCRCRCPKKKREIEDSMGFCVNIWVNLLNQQRGHERHVEALNGNEMEEHIREDYLRQFGN.

Over 1 to 16 (MLLIRRTINAFLGCIH) the chain is Cytoplasmic. A helical; Signal-anchor for type II membrane protein transmembrane segment spans residues 17-37 (CNLTATCILIAFVITMYVVLV). The segment at 38–82 (SEPASVDGTMGNFLPFSKMDLATKRDRPFYSNCVNTQDYLLNPSY) is stem region. Topologically, residues 38–522 (SEPASVDGTM…REDYLRQFGN (485 aa)) are lumenal. Positions 83-522 (IKQNASFVML…REDYLRQFGN (440 aa)) are catalytic. N86 is a glycosylation site (N-linked (GlcNAc...) asparagine). The active-site Nucleophile is the E363.

The protein belongs to the glycosyltransferase 15 family.

The protein resides in the membrane. In terms of biological role, possible glycosyltransferase that transfers an alpha-D-mannosyl residue from GDP-mannose into lipid-linked oligosaccharide, forming an alpha-(1-&gt;2)-D-mannosyl-D-mannose linkage. This is Probable mannosyltransferase KTR5 (KTR5) from Saccharomyces cerevisiae (strain ATCC 204508 / S288c) (Baker's yeast).